The chain runs to 634 residues: Threonine--tRNA ligase (634 aa).

A TGS domain is found at 1-61; that stretch reads MINITLPDGS…DHDASLRIIT (61 aa). The tract at residues 243–534 is catalytic; sequence DHRRIGKAQD…LIEHHAGAFP (292 aa). Zn(2+) is bound by residues cysteine 334, histidine 385, and histidine 511.

It belongs to the class-II aminoacyl-tRNA synthetase family. As to quaternary structure, homodimer. Requires Zn(2+) as cofactor.

It is found in the cytoplasm. The enzyme catalyses tRNA(Thr) + L-threonine + ATP = L-threonyl-tRNA(Thr) + AMP + diphosphate + H(+). Functionally, catalyzes the attachment of threonine to tRNA(Thr) in a two-step reaction: L-threonine is first activated by ATP to form Thr-AMP and then transferred to the acceptor end of tRNA(Thr). Also edits incorrectly charged L-seryl-tRNA(Thr). The polypeptide is Threonine--tRNA ligase (Xanthomonas axonopodis pv. citri (strain 306)).